The primary structure comprises 356 residues: Dual-specificity RNA methyltransferase RlmN (356 aa).

Glu92 acts as the Proton acceptor in catalysis. Positions Glu98–Arg327 constitute a Radical SAM core domain. Cys105 and Cys337 form a disulfide bridge. The [4Fe-4S] cluster site is built by Cys112, Cys116, and Cys119. S-adenosyl-L-methionine contacts are provided by residues Gly162 to Glu163, Ser194, Ser216 to His218, and Asn294. The active-site S-methylcysteine intermediate is Cys337.

This sequence belongs to the radical SAM superfamily. RlmN family. [4Fe-4S] cluster serves as cofactor.

The protein localises to the cytoplasm. The catalysed reaction is adenosine(2503) in 23S rRNA + 2 reduced [2Fe-2S]-[ferredoxin] + 2 S-adenosyl-L-methionine = 2-methyladenosine(2503) in 23S rRNA + 5'-deoxyadenosine + L-methionine + 2 oxidized [2Fe-2S]-[ferredoxin] + S-adenosyl-L-homocysteine. It catalyses the reaction adenosine(37) in tRNA + 2 reduced [2Fe-2S]-[ferredoxin] + 2 S-adenosyl-L-methionine = 2-methyladenosine(37) in tRNA + 5'-deoxyadenosine + L-methionine + 2 oxidized [2Fe-2S]-[ferredoxin] + S-adenosyl-L-homocysteine. In terms of biological role, specifically methylates position 2 of adenine 2503 in 23S rRNA and position 2 of adenine 37 in tRNAs. m2A2503 modification seems to play a crucial role in the proofreading step occurring at the peptidyl transferase center and thus would serve to optimize ribosomal fidelity. This chain is Dual-specificity RNA methyltransferase RlmN, found in Ruthia magnifica subsp. Calyptogena magnifica.